The primary structure comprises 198 residues: Probable septum site-determining protein MinC (198 aa).

Belongs to the MinC family. As to quaternary structure, interacts with MinD and FtsZ.

Its function is as follows. Cell division inhibitor that blocks the formation of polar Z ring septums. Rapidly oscillates between the poles of the cell to destabilize FtsZ filaments that have formed before they mature into polar Z rings. Prevents FtsZ polymerization. The sequence is that of Probable septum site-determining protein MinC from Thermosipho melanesiensis (strain DSM 12029 / CIP 104789 / BI429).